The primary structure comprises 561 residues: Asparagine synthetase [glutamine-hydrolyzing] (561 aa).

Cys-2 acts as the For GATase activity in catalysis. The region spanning 2–191 (CGIWALFGSD…PGHYEVLDLK (190 aa)) is the Glutamine amidotransferase type-2 domain. L-glutamine contacts are provided by residues 49-53 (RLAVV), 75-77 (NGE), and Asp-97. An Asparagine synthetase domain is found at 213–536 (HAIYDSVEKL…PGRADWLTHY (324 aa)). Residues Leu-256, Ile-288, and 363 to 364 (SG) each bind ATP. Lys-385 is modified (N6-acetyllysine). At Thr-545 the chain carries Phosphothreonine. Ser-557 carries the phosphoserine modification.

It carries out the reaction L-aspartate + L-glutamine + ATP + H2O = L-asparagine + L-glutamate + AMP + diphosphate + H(+). The protein operates within amino-acid biosynthesis; L-asparagine biosynthesis; L-asparagine from L-aspartate (L-Gln route): step 1/1. The sequence is that of Asparagine synthetase [glutamine-hydrolyzing] (Asns) from Mus musculus (Mouse).